The following is a 246-amino-acid chain: Acetoacetyl-CoA reductase (246 aa).

Residues Gly-13 to Ile-15, Gly-35, Arg-40, Gly-60 to Val-62, and Asn-88 to Thr-92 contribute to the NADP(+) site. Residues Asp-94 and Gln-147–Gln-150 each bind substrate. Tyr-153 (proton acceptor) is an active-site residue. NADP(+) is bound at residue Pro-183–Ile-186. Substrate-binding positions include Gly-184–Tyr-185 and Arg-195.

This sequence belongs to the short-chain dehydrogenases/reductases (SDR) family. Homotetramer.

The protein localises to the cytoplasm. It catalyses the reaction a (3R)-3-hydroxyacyl-CoA + NADP(+) = a 3-oxoacyl-CoA + NADPH + H(+). It carries out the reaction (3R)-3-hydroxybutanoyl-CoA + NADP(+) = acetoacetyl-CoA + NADPH + H(+). Its pathway is biopolymer metabolism; poly-(R)-3-hydroxybutanoate biosynthesis. Its function is as follows. Catalyzes the chiral reduction of acetoacetyl-CoA to (R)-3-hydroxybutyryl-CoA. Is involved in the biosynthesis of polyhydroxybutyrate (PHB), which is accumulated as an intracellular energy reserve material when cells grow under conditions of nutrient limitation. The protein is Acetoacetyl-CoA reductase of Cupriavidus necator (strain ATCC 17699 / DSM 428 / KCTC 22496 / NCIMB 10442 / H16 / Stanier 337) (Ralstonia eutropha).